The following is a 236-amino-acid chain: 5'-methylthioadenosine/S-adenosylhomocysteine nucleosidase (236 aa).

Glu-12 (proton acceptor) is an active-site residue. Substrate-binding positions include Gly-78, Ile-153, and Met-174 to Glu-175. Asp-198 functions as the Proton donor in the catalytic mechanism.

This sequence belongs to the PNP/UDP phosphorylase family. MtnN subfamily.

It catalyses the reaction S-adenosyl-L-homocysteine + H2O = S-(5-deoxy-D-ribos-5-yl)-L-homocysteine + adenine. The catalysed reaction is S-methyl-5'-thioadenosine + H2O = 5-(methylsulfanyl)-D-ribose + adenine. It carries out the reaction 5'-deoxyadenosine + H2O = 5-deoxy-D-ribose + adenine. It participates in amino-acid biosynthesis; L-methionine biosynthesis via salvage pathway; S-methyl-5-thio-alpha-D-ribose 1-phosphate from S-methyl-5'-thioadenosine (hydrolase route): step 1/2. In terms of biological role, catalyzes the irreversible cleavage of the glycosidic bond in both 5'-methylthioadenosine (MTA) and S-adenosylhomocysteine (SAH/AdoHcy) to adenine and the corresponding thioribose, 5'-methylthioribose and S-ribosylhomocysteine, respectively. Also cleaves 5'-deoxyadenosine, a toxic by-product of radical S-adenosylmethionine (SAM) enzymes, into 5-deoxyribose and adenine. The protein is 5'-methylthioadenosine/S-adenosylhomocysteine nucleosidase of Shewanella oneidensis (strain ATCC 700550 / JCM 31522 / CIP 106686 / LMG 19005 / NCIMB 14063 / MR-1).